Here is a 1435-residue protein sequence, read N- to C-terminus: Dicer-like protein 2 (1435 aa).

The Helicase ATP-binding domain occupies 54 to 234 (MLSESLRQNI…LEVLEINLNA (181 aa)). Residue 67–74 (MDTGSGKT) coordinates ATP. Positions 175-178 (DEAH) match the DEAH box motif. Positions 400 to 564 (KLIDFLVLEH…ENKRALEHIQ (165 aa)) constitute a Helicase C-terminal domain. The 94-residue stretch at 591–684 (ARNHLSHFCG…MPAHHHIDDE (94 aa)) folds into the Dicer dsRNA-binding fold domain. 2 consecutive RNase III domains span residues 956 to 1099 (ANEL…IDGG) and 1141 to 1323 (LSEI…IDSQ). Residues Glu-1178, Asp-1309, and Glu-1312 each coordinate Mg(2+).

The protein belongs to the helicase family. Dicer subfamily. The cofactor is Mg(2+). Mn(2+) serves as cofactor.

In terms of biological role, dicer-like endonuclease involved in cleaving double-stranded RNA in the RNA interference (RNAi) pathway. Produces 21 to 25 bp dsRNAs (siRNAs) which target the selective destruction of homologous RNAs leading to sequence-specific suppression of gene expression, called post-transcriptional gene silencing (PTGS). Part of a broad host defense response against viral infection and transposons. This Coccidioides immitis (strain RS) (Valley fever fungus) protein is Dicer-like protein 2 (DCL2).